The primary structure comprises 99 residues: Large ribosomal subunit protein uL23 (99 aa).

Belongs to the universal ribosomal protein uL23 family. As to quaternary structure, part of the 50S ribosomal subunit. Contacts protein L29, and trigger factor when it is bound to the ribosome.

Its function is as follows. One of the early assembly proteins it binds 23S rRNA. One of the proteins that surrounds the polypeptide exit tunnel on the outside of the ribosome. Forms the main docking site for trigger factor binding to the ribosome. The sequence is that of Large ribosomal subunit protein uL23 from Shewanella sediminis (strain HAW-EB3).